Here is a 690-residue protein sequence, read N- to C-terminus: Protein-glutamine gamma-glutamyltransferase 2 (690 aa).

Residue A2 is modified to N-acetylalanine. Disulfide bonds link C230–C370 and C370–C371. Active-site residues include C277, H335, and D358. N398, D400, E436, E446, and E451 together coordinate Ca(2+). At K467 the chain carries N6-acetyllysine. 479–486 contributes to the GTP binding site; that stretch reads RIRVGQNM. Position 542 (E542) interacts with Ca(2+). 583-586 is a binding site for GTP; that stretch reads RDIY. Q636 participates in a covalent cross-link: Isoglutamyl lysine isopeptide (Gln-Lys) (interchain with K-?).

It belongs to the transglutaminase superfamily. Transglutaminase family. Monomer. Interacts with phospholipase C; promoting alpha-1 adrenergic receptor signaling. Interacts with PLCD1. Ca(2+) serves as cofactor. Disulfide bond formation inactivates the calcium-dependent acyltransferase activity. Cys-370 can form disulfide bonds with both Cys-230 and Cys-371: formation of a disulfide bond between Cys-230 and Cys-370 facilitates formation of the disulfide between Cys-370 and Cys-371, which promotes inactivation of the acyltransferase activity. May also form interchain disulfids between Cys-230 and Cys-370. Ca(2+) protects against disulfide bond formation and inactivation. In terms of processing, auto-transglutaminated: Forms covalent cross-links mediated by transglutaminase between Gln-636 and the epsilon-amino group of a lysine residue of itself or HMGB1, forming homopolymers and heteropolymers, respectively. Post-translationally, S-nitrosylated, leading to inactivation of the acyltransferase activity.

It localises to the cytoplasm. The protein resides in the cytosol. The protein localises to the nucleus. It is found in the chromosome. Its subcellular location is the secreted. It localises to the extracellular space. The protein resides in the extracellular matrix. The protein localises to the cell membrane. It is found in the mitochondrion. It carries out the reaction L-glutaminyl-[protein] + L-lysyl-[protein] = [protein]-L-lysyl-N(6)-5-L-glutamyl-[protein] + NH4(+). The catalysed reaction is L-glutaminyl-[protein] + serotonin = 5-serotonyl-L-glutamyl-[protein] + NH4(+). The enzyme catalyses L-glutaminyl-[protein] + dopamine = 5-dopaminyl-L-glutamyl-[protein] + NH4(+). It catalyses the reaction L-glutaminyl-[protein] + histamine = 5-histaminyl-L-glutamyl-[protein] + NH4(+). It carries out the reaction L-glutaminyl-[protein] + (R)-noradrenaline = 5-(R)-noradrenalinyl-L-glutamyl-[protein] + NH4(+). The catalysed reaction is L-glutaminyl-[protein] + H2O = L-glutamyl-[protein] + NH4(+). With respect to regulation, acyltransferase activity is regulated by the binding of GTP and Ca(2+): inactivated by GTP, which stabilizes its closed structure, thereby obstructing the accessibility of substrates to the active sites. In contrast, Ca(2+) acts as a cofactor by inducing conformational change to the active open form. In absence of Ca(2+), Mg(2+) may bind Ca(2+)-binding sites, promoting GTP-binding and subsequent inhibition of the acyltransferase activity. Extracellularly reduced and activated by CLIC3. Calcium-dependent acyltransferase that catalyzes the formation of covalent bonds between peptide-bound glutamine and various primary amines, such as gamma-amino group of peptide-bound lysine, or mono- and polyamines, thereby producing cross-linked or aminated proteins, respectively. Involved in many biological processes, such as bone development, angiogenesis, wound healing, cellular differentiation, chromatin modification and apoptosis. Acts as a protein-glutamine gamma-glutamyltransferase by mediating the cross-linking of proteins, such as ACO2, HSPB6, FN1, HMGB1, RAP1GDS1, SLC25A4/ANT1, SPP1 and WDR54. Under physiological conditions, the protein cross-linking activity is inhibited by GTP; inhibition is relieved by Ca(2+) in response to various stresses. When secreted, catalyzes cross-linking of proteins of the extracellular matrix, such as FN1 and SPP1 resulting in the formation of scaffolds. Plays a key role during apoptosis, both by (1) promoting the cross-linking of cytoskeletal proteins resulting in condensation of the cytoplasm, and by (2) mediating cross-linking proteins of the extracellular matrix, resulting in the irreversible formation of scaffolds that stabilize the integrity of the dying cells before their clearance by phagocytosis, thereby preventing the leakage of harmful intracellular components. In addition to protein cross-linking, can use different monoamine substrates to catalyze a vast array of protein post-translational modifications: mediates aminylation of serotonin, dopamine, noradrenaline or histamine into glutamine residues of target proteins to generate protein serotonylation, dopaminylation, noradrenalinylation or histaminylation, respectively. Mediates protein serotonylation of small GTPases during activation and aggregation of platelets, leading to constitutive activation of these GTPases. Plays a key role in chromatin organization by mediating serotonylation and dopaminylation of histone H3. Catalyzes serotonylation of 'Gln-5' of histone H3 (H3Q5ser) during serotonergic neuron differentiation, thereby facilitating transcription. Acts as a mediator of neurotransmission-independent role of nuclear dopamine in ventral tegmental area (VTA) neurons: catalyzes dopaminylation of 'Gln-5' of histone H3 (H3Q5dop), thereby regulating relapse-related transcriptional plasticity in the reward system. Regulates vein remodeling by mediating serotonylation and subsequent inactivation of ATP2A2/SERCA2. Also acts as a protein deamidase by mediating the side chain deamidation of specific glutamine residues of proteins to glutamate. Catalyzes specific deamidation of protein gliadin, a component of wheat gluten in the diet. May also act as an isopeptidase cleaving the previously formed cross-links. Also able to participate in signaling pathways independently of its acyltransferase activity: acts as a signal transducer in alpha-1 adrenergic receptor-mediated stimulation of phospholipase C-delta (PLCD) activity and is required for coupling alpha-1 adrenergic agonists to the stimulation of phosphoinositide lipid metabolism. This Cavia cutleri (Guinea pig) protein is Protein-glutamine gamma-glutamyltransferase 2.